The following is a 310-amino-acid chain: Cytochrome f (310 aa).

An N-terminal signal peptide occupies residues 1 to 23 (MRRLLSSTFAALIVGLAVFSAPA). Heme contacts are provided by Tyr-28, Cys-48, Cys-51, and His-52. The chain crosses the membrane as a helical span at residues 277–297 (IYGMLAFFAAVALAQIMLVLK).

Belongs to the cytochrome f family. As to quaternary structure, the 4 large subunits of the cytochrome b6-f complex are cytochrome b6, subunit IV (17 kDa polypeptide, PetD), cytochrome f and the Rieske protein, while the 4 small subunits are PetG, PetL, PetM and PetN. The complex functions as a dimer. The cofactor is heme.

Its subcellular location is the cellular thylakoid membrane. Component of the cytochrome b6-f complex, which mediates electron transfer between photosystem II (PSII) and photosystem I (PSI), cyclic electron flow around PSI, and state transitions. The protein is Cytochrome f of Synechococcus sp. (strain CC9311).